Here is a 475-residue protein sequence, read N- to C-terminus: Eukaryotic translation initiation factor 3 subunit L (475 aa).

Residues 257-451 (DAIRMFSHIL…DLDYAMQGDL (195 aa)) enclose the PCI domain.

It belongs to the eIF-3 subunit L family. In terms of assembly, component of the eukaryotic translation initiation factor 3 (eIF-3) complex.

It is found in the cytoplasm. Its function is as follows. Component of the eukaryotic translation initiation factor 3 (eIF-3) complex, which is involved in protein synthesis of a specialized repertoire of mRNAs and, together with other initiation factors, stimulates binding of mRNA and methionyl-tRNAi to the 40S ribosome. The eIF-3 complex specifically targets and initiates translation of a subset of mRNAs involved in cell proliferation. This Botryotinia fuckeliana (strain B05.10) (Noble rot fungus) protein is Eukaryotic translation initiation factor 3 subunit L.